Consider the following 478-residue polypeptide: Transposase for insertion sequence element IS231C (478 aa).

This sequence belongs to the transposase 11 family.

Involved in the transposition of the insertion sequence. The polypeptide is Transposase for insertion sequence element IS231C (Bacillus thuringiensis subsp. berliner).